Consider the following 697-residue polypeptide: T-related protein (697 aa).

The disordered stretch occupies residues 1–60 (MTTSHILSAVDPTTGLSGNVSGGGGGGGAGGGAGSGSPQHVTHNGHGHGHGLGGVAAVSG). 2 stretches are compositionally biased toward gly residues: residues 20 to 35 (VSGG…GAGS) and 50 to 60 (HGLGGVAAVSG). Positions 96 to 264 (LWLRFQNLTN…YNPFAKAFLD (169 aa)) form a DNA-binding region, T-box. Positions 316-330 (SVSSAESVGPSSGGS) are enriched in low complexity. Disordered stretches follow at residues 316-407 (SVSS…GGIG) and 462-488 (VCSG…TSSP). Residues 337-351 (SLSSRSVAPTRTTPY) show a composition bias toward polar residues. 3 stretches are compositionally biased toward low complexity: residues 352 to 373 (SRPR…SSTS), 381 to 401 (QTPT…VSSS), and 469 to 488 (SSHN…TSSP).

The protein resides in the nucleus. In terms of biological role, required for the specification of the hindgut and anal pads. This chain is T-related protein (byn), found in Drosophila melanogaster (Fruit fly).